A 691-amino-acid chain; its full sequence is MASLPLCRSPSSLLPSWPHRPISASFNPKNPSSPVAAHVSVQETPPQPQDPSPPSDSNPNGTRPSSSSNTRFLWVNPNSPRAADVARARAGSGRRARLASAAAALGACETTESAVEAALQAAFPEPPSEQDAVIVLNTAAATRAETAVLALRWFLGNAKVRKKVILYNVVLKLLRKKRLWSETEALWAEMLRDGVQPDNATFSTVISCARACGLHSKAVEWFDKMPEFGCSPDMLTYSAVIDAYGHAGNSEAALRLYDRARAEKWQLDPVICSTVIKVHSTSGNFDGALNVFEEMKAIGVRPNLVVYNTMLDAMGRALRPWVVKTIHREMVDQQVQPSRATYCCLLHAYTRARYGEDAMAVYRLMKDEAMGIDVMLYNMLLSMCADIGYVDEAEEIFRDMKASMGAHSKPDSWSYSSMVTLYSSTANVLSAEGILNEMVEAGFKPNIFVLTSLIRCYGKVGRTDDVVRSFGMLQDLGIIPDDRFCGCLLSVAANTPAEELGKVISCIERSNVQLGAVVKLLVDRSSSESFREAARELLRSSRGVVKMPYCNCLMDLCVNLNQMEKACALLDAAQQLGIYANIQTRTQTQWSLHLRGLSVGAALTTLHVWMNDLYTSLQTGNEGLPPLLGIHTGQGKNTYSDRGLAAMFEAHLKELDAPFHEAPDKAGWFLTTNVAAKQWLESKAASELVTV.

Residues 1–17 (MASLPLCRSPSSLLPSW) show a composition bias toward low complexity. The N-terminal 35 residues, 1-35 (MASLPLCRSPSSLLPSWPHRPISASFNPKNPSSPV), are a transit peptide targeting the chloroplast. The segment at 1–76 (MASLPLCRSP…SSNTRFLWVN (76 aa)) is disordered. Residues 24-33 (ASFNPKNPSS) are compositionally biased toward polar residues. The span at 45–56 (PPQPQDPSPPSD) shows a compositional bias: pro residues. A compositionally biased stretch (polar residues) spans 61 to 76 (GTRPSSSSNTRFLWVN). 10 PPR repeats span residues 163 to 197 (KVIL…GVQP), 198 to 232 (DNAT…GCSP), 233 to 267 (DMLT…KWQL), 268 to 302 (DPVI…GVRP), 303 to 337 (NLVV…QVQP), 338 to 372 (SRAT…AMGI), 373 to 403 (DVML…MKAS), 411 to 445 (DSWS…GFKP), 446 to 480 (NIFV…GIIP), and 546 to 580 (KMPY…GIYA). Residues 592–677 (LHLRGLSVGA…WFLTTNVAAK (86 aa)) form the Smr domain.

The protein belongs to the PPR family. P subfamily.

The protein resides in the plastid. Its subcellular location is the chloroplast stroma. Its function is as follows. Involved in translation and accumulation of chloroplast ATP synthase subunits. Interacts with the 5'-UTR of the chloroplast bicistronic atpB and atpE mRNA and activates its translation by facilitating ribosome association with the mRNA. Required for accumulation and activity of the chloroplast ATP synthase. Enhances atpA translation and is required for accumulation of specific processed atpF and psaJ transcripts. Required for the stabilization of bicistronic rpl16 and rpl14 mRNAs. The chain is Pentatricopeptide repeat-containing protein ATP4, chloroplastic from Zea mays (Maize).